The sequence spans 491 residues: Cytochrome P450 2F3 (491 aa).

Cys436 contacts heme.

Belongs to the cytochrome P450 family. Requires heme as cofactor. Lung specific.

Its subcellular location is the endoplasmic reticulum membrane. It is found in the microsome membrane. It catalyses the reaction an organic molecule + reduced [NADPH--hemoprotein reductase] + O2 = an alcohol + oxidized [NADPH--hemoprotein reductase] + H2O + H(+). Functionally, bioactivates 3-methylindole (3MI) by dehydrogenation to the putative electrophile 3-methylene-indolenine. Stereoselectively catalyzes the formation of the 1R,2S-oxide from naphthalene. Lack activity with other common P450 substrates including 7-ethoxycoumarin. The sequence is that of Cytochrome P450 2F3 (CYP2F3) from Capra hircus (Goat).